We begin with the raw amino-acid sequence, 211 residues long: Molybdenum cofactor guanylyltransferase (211 aa).

GTP-binding positions include 12–14, K25, N53, D71, and D101; that span reads LAG. D101 provides a ligand contact to Mg(2+).

Belongs to the MobA family. In terms of assembly, monomer. It depends on Mg(2+) as a cofactor.

The protein localises to the cytoplasm. The enzyme catalyses Mo-molybdopterin + GTP + H(+) = Mo-molybdopterin guanine dinucleotide + diphosphate. In terms of biological role, transfers a GMP moiety from GTP to Mo-molybdopterin (Mo-MPT) cofactor (Moco or molybdenum cofactor) to form Mo-molybdopterin guanine dinucleotide (Mo-MGD) cofactor. The chain is Molybdenum cofactor guanylyltransferase from Acidovorax ebreus (strain TPSY) (Diaphorobacter sp. (strain TPSY)).